Reading from the N-terminus, the 233-residue chain is Histone H1-I (233 aa).

Disordered stretches follow at residues Met1 to Val55 and Thr115 to Lys233. Over residues Lys17–Pro29 the composition is skewed to low complexity. Positions Thr51–Pro125 constitute an H15 domain. Basic and acidic residues-rich tracts occupy residues Lys128–Pro137 and Pro144–Val155. 3 stretches are compositionally biased toward basic residues: residues Ala172–Ala186, Ser199–Pro213, and Ala223–Lys233.

Belongs to the histone H1/H5 family.

Its subcellular location is the nucleus. It is found in the chromosome. In terms of biological role, histones H1 are necessary for the condensation of nucleosome chains into higher-order structures. The sequence is that of Histone H1-I from Glyptotendipes salinus (Midge).